A 327-amino-acid chain; its full sequence is Probable serine/threonine-protein kinase WNK5 (327 aa).

The interval 1–48 (MPPNPTPPRRATTTTTRATSGVRRGEEEQGGMAVSASAGEEEEAFEEV) is disordered. The segment covering 9 to 19 (RRATTTTTRAT) has biased composition (low complexity). Over residues 39-48 (GEEEEAFEEV) the composition is skewed to acidic residues. The 260-residue stretch at 55–314 (GRYADVLGLG…AAELLRDPFF (260 aa)) folds into the Protein kinase domain. Residue 136–139 (TEVC) participates in ATP binding. The active-site Proton acceptor is the aspartate 203.

It belongs to the protein kinase superfamily. Ser/Thr protein kinase family. WNK subfamily.

The catalysed reaction is L-seryl-[protein] + ATP = O-phospho-L-seryl-[protein] + ADP + H(+). It carries out the reaction L-threonyl-[protein] + ATP = O-phospho-L-threonyl-[protein] + ADP + H(+). The protein is Probable serine/threonine-protein kinase WNK5 (WNK5) of Oryza sativa subsp. japonica (Rice).